Consider the following 134-residue polypeptide: Cytochrome b (134 aa).

Transmembrane regions (helical) follow at residues 33 to 53 (FGSLLGVCLATQILTGLFLAM), 77 to 98 (WILRYLHANGASMFFICLFLHV), and 113 to 133 (WNIGIILLFAVMATAFMGYVL). Heme b is bound by residues histidine 83 and histidine 97.

The protein belongs to the cytochrome b family. The cytochrome bc1 complex contains 11 subunits: 3 respiratory subunits (MT-CYB, CYC1 and UQCRFS1), 2 core proteins (UQCRC1 and UQCRC2) and 6 low-molecular weight proteins (UQCRH/QCR6, UQCRB/QCR7, UQCRQ/QCR8, UQCR10/QCR9, UQCR11/QCR10 and a cleavage product of UQCRFS1). This cytochrome bc1 complex then forms a dimer. Heme b is required as a cofactor.

It localises to the mitochondrion inner membrane. Functionally, component of the ubiquinol-cytochrome c reductase complex (complex III or cytochrome b-c1 complex) that is part of the mitochondrial respiratory chain. The b-c1 complex mediates electron transfer from ubiquinol to cytochrome c. Contributes to the generation of a proton gradient across the mitochondrial membrane that is then used for ATP synthesis. The chain is Cytochrome b (MT-CYB) from Rhinolophus hipposideros (Lesser horseshoe bat).